Reading from the N-terminus, the 2677-residue chain is MSTCCWCTPGGASTIDFLKRYASNTPSGEFQTADEDLCYCLECVAEYHKARDELPFLHEVLWELETLRLINHFEKSMKAEIGDDDELYIVDNNGEMPLFDITGQDFENKLRVPLLEILKYPYLLLHERVNELCVEALCRMEQANCSFQVFDKHPGIYLFLVHPNEMVRRWAILTARNLGKVDRDDYYDLQEVLLCLFKVIELGLLESPDIYTSSVLEKGKLILLPSHMYDTTNYKSYWLGICMLLTILEEQAMDSLLLGSDKQNDFMQSILHTMEREADDDSVDPFWPALHCFMVILDRLGSKVWGQLMDPIVAFQTIINNASYNREIRHIRNSSVRTKLEPESYLDDMVTCSQIVYNYNPEKTKKDSGWRTAICPDYCPNMYEEMETLASVLQSDIGQDMRVHNSTFLWFIPFVQSLMDLKDLGVAYIAQVVNHLYSEVKEVLNQTDAVCDKVTEFFLLILVSVIELHRNKKCLHLLWVSSQQWVEAVVKCAKLPTTAFTRSSEKSSGNCSKGTAMISSLSLHSMPSNSVQLAYVQLIRSLLKEGYQLGQQSLCKRFWDKLNLFLRGNLSLGWQLTSQETHELQSCLKQIIRNIKFKAPPCNTFVDLTSACKISPASYNKEESEQMGKTSRKDMHCLEASSPTFSKEPMKVQDSVLIKADNTIEGDNNEQNYIKDVKLEDHLLAGSCLKQSSKNIFTERAEDQIKISTRKQKSVKEISSYTPKDCTSRNGPERGCDRGIIVSTRLLTDSSTDALEKVSTSNEDFSLKDDALAKTSKRKTKVQKDEICAKLSHVIKKQHRKSTLVDNTINLDENLTVSNIESFYSRKDTGVQKGDGFIHNLSLDPSGVLDDKNGEQKSQNNVLPKEKQLKNEELVIFSFHENNCKIQEFHVDGKELIPFTEMTNASEKKSSPFKDLMTVPESRDEEMSNSTSVIYSNLTREQAPDISPKSDTLTDSQIDRDLHKLSLLAQASVITFPSDSPQNSSQLQRKVKEDKRCFTANQNNVGDTSRGQVIIISDSDDDDDERILSLEKLTKQDKICLEREHPEQHVSTVNSKEEKNPVKEEKTETLFQFEESDSQCFEFESSSEVFSVWQDHPDDNNSVQDGEKKCLAPIANTTNGQGCTDYVSEVVKKGAEGIEEHTRPRSISVEEFCEIEVKKPKRKRSEKPMAEDPVRPSSSVRNEGQSDTNKRDLVGNDFKSIDRRTSTPNSRIQRATTVSQKKSSKLCTCTEPIRKVPVSKTPKKTHSDAKKGQNRSSNYLSCRTTPAIVPPKKFRQCPEPTSTAEKLGLKKGPRKAYELSQRSLDYVAQLRDHGKTVGVVDTRKKTKLISPQNLSVRNNKKLLTSQELQMQRQIRPKSQKNRRRLSDCESTDVKRAGSHTAQNSDIFVPESDRSDYNCTGGTEVLANSNRKQLIKCMPSEPETIKAKHGSPATDDACPLNQCDSVVLNGTVPTNEVIVSTSEDPLGGGDPTARHIEMAALKEGEPDSSSDAEEDNLFLTQNDPEDMDLCSQMENDNYKLIELIHGKDTVEVEEDSVSRPQLESLSGTKCKYKDCLETTKNQGEYCPKHSEVKAADEDVFRKPGLPPPASKPLRPTTKIFSSKSTSRIAGLSKSLETSSALSPSLKNKSKGIQSILKVPQPVPLIAQKPVGEMKNSCNVLHPQSPNNSNRQGCKVPFGESKYFPSSSPVNILLSSQSVSDTFVKEVLKWKYEMFLNFGQCGPPASLCQSISRPVPVRFHNYGDYFNVFFPLMVLNTFETVAQEWLNSPNRENFYQLQVRKFPADYIKYWEFAVYLEECELAKQLYPKENDLVFLAPERINEEKKDTERNDIQDLHEYHSGYVHKFRRTSVMRNGKTECYLSIQTQENFPANLNELVNCIVISSLVTTQRKLKAMSLLGSRNQLARAVLNPNPMDFCTKDLLTTTSERIIAYLRDFNEDQKKAIETAYAMVKHSPSVAKICLIHGPPGTGKSKTIVGLLYRLLTENQRKGHSDENSNAKIKQNRVLVCAPSNAAVDELMKKIILEFKEKCKDKKNPLGNCGDINLVRLGPEKSINSEVLKFSLDSQVNHRMKKELPSHVQAMHKRKEFLDYQLDELSRQRALCRGGREIQRQELDENISKVSKERQELASKIKEVQGRPQKTQSIIILESHIICCTLSTSGGLLLESAFRGQGGVPFSCVIVDEAGQSCEIETLTPLIHRCNKLILVGDPKQLPPTVISMKAQEYGYDQSMMARFCRLLEENVEHNMISRLPILQLTVQYRMHPDICLFPSNYVYNRNLKTNRQTEAIRCSSDWPFQPYLVFDVGDGSERRDNDSYINVQEIKLVMEIIKLIKDKRKDVSFRNIGIITHYKAQKTMIQKDLDKEFDRKGPAEVDTVDAFQGRQKDCVIVTCVRANSIQGSIGFLASLQRLNVTITRAKYSLFILGHLRTLMENQHWNQLIQDAQKRGAIIKTCDKNYRHDAVKILKLKPVLQRSLTHPPTIAPEGSRPQGGLPSSKLDSGFAKTSVAASLYHTPSDSKEITLTVTSKDPERPPVHDQLQDPRLLKRMGIEVKGGIFLWDPQPSSPQHPGATPPTGEPGFPVVHQDLSHIQQPAAVVAALSSHKPPVRGEPPAASPEASTCQSKCDDPEEELCHRREARAFSEGEQEKCGSETHHTRRNSRWDKRTLEQEDSSSKKRKLL.

Residue Lys-339 forms a Glycyl lysine isopeptide (Lys-Gly) (interchain with G-Cter in SUMO1) linkage. Ser-615, Ser-642, and Ser-878 each carry phosphoserine. Lys-894 is covalently cross-linked (Glycyl lysine isopeptide (Lys-Gly) (interchain with G-Cter in SUMO2)). A phosphoserine mark is found at Ser-911, Ser-947, Ser-956, Ser-1017, and Ser-1019. Residues Lys-1056 and Lys-1063 each participate in a glycyl lysine isopeptide (Lys-Gly) (interchain with G-Cter in SUMO2) cross-link. Disordered regions lie at residues 1158-1219 (KKPK…TTVS) and 1237-1258 (PVSK…RSSN). Over residues 1176 to 1187 (PSSSVRNEGQSD) the composition is skewed to polar residues. Positions 1188–1205 (TNKRDLVGNDFKSIDRRT) are enriched in basic and acidic residues. A compositionally biased stretch (polar residues) spans 1206 to 1219 (STPNSRIQRATTVS). Phosphoserine is present on Ser-1330. Glycyl lysine isopeptide (Lys-Gly) (interchain with G-Cter in SUMO2) cross-links involve residues Lys-1340 and Lys-1341. The disordered stretch occupies residues 1351–1385 (QRQIRPKSQKNRRRLSDCESTDVKRAGSHTAQNSD). The segment covering 1354-1363 (IRPKSQKNRR) has biased composition (basic residues). A compositionally biased stretch (basic and acidic residues) spans 1364-1375 (RLSDCESTDVKR). At Ser-1366 the chain carries Phosphoserine. Lys-1415 is covalently cross-linked (Glycyl lysine isopeptide (Lys-Gly) (interchain with G-Cter in SUMO2)). Ser-1489 bears the Phosphoserine mark. A disordered region spans residues 1579–1604 (FRKPGLPPPASKPLRPTTKIFSSKST). A phosphoserine mark is found at Ser-1621, Ser-1623, and Ser-1663. 1963–1970 (GPPGTGKS) is a binding site for ATP. The Bipartite nuclear localization signal signature appears at 2070-2087 (KKELPSHVQAMHKRKEFL). A coiled-coil region spans residues 2105 to 2136 (REIQRQELDENISKVSKERQELASKIKEVQGR). A Phosphothreonine modification is found at Thr-2474. 3 disordered regions span residues 2474–2496 (THPP…SKLD), 2556–2577 (WDPQ…EPGF), and 2597–2677 (LSSH…RKLL). A compositionally biased stretch (pro residues) spans 2560 to 2573 (PSSPQHPGATPPTG). Residues 2628-2671 (ELCHRREARAFSEGEQEKCGSETHHTRRNSRWDKRTLEQEDSSS) show a composition bias toward basic and acidic residues. The tract at residues 2661–2677 (KRTLEQEDSSSKKRKLL) is necessary for nuclear localization.

It belongs to the DNA2/NAM7 helicase family. Homodimer. Interacts with PER2; the interaction inhibits termination of circadian target genes. Interacts with CHD4, POLR2A, PRKDC and TRIM28. Interacts with UBE2I. Interacts (via N-terminus domain) with EXOSC9 (via C-terminus region); the interaction enhances SETX sumoylation. Interacts with NCL (via N-terminus domain). Interacts with PABPN1, PABPC1 and SF3B1. Interacts with SMN1/SMN2 and POLR2A; SMN1/SMN2 recruits SETX to POLR2A. Ubiquitinated. In terms of processing, sumoylated preferentially with SUMO2 or SUMO3. Highly expressed in skeletal muscle. Expressed in heart, fibroblast, placenta and liver. Weakly expressed in brain and lung. Expressed in the cortex of the kidney (highly expressed in tubular epithelial cells but low expression in the glomerulus).

The protein localises to the nucleus. The protein resides in the nucleoplasm. Its subcellular location is the nucleolus. It localises to the cytoplasm. It is found in the chromosome. The protein localises to the telomere. The protein resides in the cell projection. Its subcellular location is the axon. It localises to the growth cone. In terms of biological role, probable RNA/DNA helicase involved in diverse aspects of RNA metabolism and genomic integrity. Plays a role in transcription regulation by its ability to modulate RNA Polymerase II (Pol II) binding to chromatin and through its interaction with proteins involved in transcription. Contributes to the mRNA splicing efficiency and splice site selection. Required for the resolution of R-loop RNA-DNA hybrid formation at G-rich pause sites located downstream of the poly(A) site, allowing XRN2 recruitment and XRN2-mediated degradation of the downstream cleaved RNA and hence efficient RNA polymerase II (RNAp II) transcription termination. Required for the 3' transcriptional termination of PER1 and CRY2, thus playing an important role in the circadian rhythm regulation. Involved in DNA double-strand breaks damage response generated by oxidative stress. In association with RRP45, targets the RNA exosome complex to sites of transcription-induced DNA damage. Plays a role in the development and maturation of germ cells: essential for male meiosis, acting at the interface of transcription and meiotic recombination, and in the process of gene silencing during meiotic sex chromosome inactivation (MSCI). May be involved in telomeric stability through the regulation of telomere repeat-containing RNA (TERRA) transcription. Plays a role in neurite outgrowth in hippocampal cells through FGF8-activated signaling pathways. Inhibits retinoic acid-induced apoptosis. In Homo sapiens (Human), this protein is Probable helicase senataxin.